A 317-amino-acid polypeptide reads, in one-letter code: Proline-rich protein 2 (317 aa).

Residues 1–16 (MLVVLFTVALLALSSA) form the signal peptide. The disordered stretch occupies residues 15–317 (SAQGPREELQ…PPQGRPQGPQ (303 aa)). A compositionally biased stretch (pro residues) spans 32–44 (QRPPPSGSQPRPP). An N-linked (GlcNAc...) asparagine glycan is attached at Asn-46. Composition is skewed to pro residues over residues 51 to 183 (GPPP…PPAG) and 204 to 288 (QSPP…PTQG). Residues 289–305 (PHPTGGPQQTPPLAGNP) are compositionally biased toward low complexity. Residues 306-317 (QGPPQGRPQGPQ) are compositionally biased toward pro residues.

The protein resides in the secreted. This is Proline-rich protein 2 (Prp2) from Mus musculus (Mouse).